The chain runs to 130 residues: Holo-[acyl-carrier-protein] synthase (130 aa).

Mg(2+) contacts are provided by D8 and E62.

The protein belongs to the P-Pant transferase superfamily. AcpS family. Mg(2+) serves as cofactor.

Its subcellular location is the cytoplasm. The catalysed reaction is apo-[ACP] + CoA = holo-[ACP] + adenosine 3',5'-bisphosphate + H(+). Its function is as follows. Transfers the 4'-phosphopantetheine moiety from coenzyme A to a Ser of acyl-carrier-protein. This Variovorax paradoxus (strain S110) protein is Holo-[acyl-carrier-protein] synthase.